A 1506-amino-acid chain; its full sequence is Condensin-2 complex subunit D3 (1506 aa).

The interval 154–194 is disordered; sequence SNLTQKRKKDHSKSSKDNYRKSRKRGKPPRKEDYQVDELSR. 3 HEAT repeats span residues 442-476, 532-567, and 574-605; these read HKFF…LELS, PGER…LKHC, and QDLL…VMAQ. Phosphoserine is present on serine 562. Positions 884-897 are enriched in polar residues; it reads SDHLPSSQGTTDAL. The tract at residues 884–908 is disordered; the sequence is SDHLPSSQGTTDALDSQPPFQPRSS. An HEAT 4 repeat occupies 968–1004; the sequence is TVMVDNYIPNISVCLKDSDPFIRKQTLVLLTNLLQEE. The stretch at 1213–1270 forms a coiled coil; sequence ALRELMNYLREVMQDYRDEINDFFAVDKQLASELEYDMKKYNEQLAQEQALTEHANAT. Residues 1317 to 1353 are disordered; it reads QDNADVPPTQSRPSAPRSNFTPTLPPISENGPLKIMS. Residues 1324–1338 show a composition bias toward polar residues; it reads PTQSRPSAPRSNFTP. A phosphoserine mark is found at serine 1359, serine 1368, serine 1381, and serine 1393. Disordered regions lie at residues 1385 to 1412 and 1473 to 1506; these read LPFN…ESDR and PQSP…KTAN. Residues 1393–1405 are compositionally biased toward low complexity; that stretch reads SPENPSSHESSLS. Basic residues predominate over residues 1492–1506; it reads SSRRSLRKAPLKTAN.

As to quaternary structure, component of the condensin-2 complex, which contains the SMC2 and SMC4 heterodimer, and 3 non SMC subunits that probably regulate the complex: NCAPH2, NCAPD3 and NCAPG2.

It localises to the nucleus. Functionally, regulatory subunit of the condensin-2 complex, a complex which establishes mitotic chromosome architecture and is involved in physical rigidity of the chromatid axis. May promote the resolution of double-strand DNA catenanes (intertwines) between sister chromatids. Condensin-mediated compaction likely increases tension in catenated sister chromatids, providing directionality for type II topoisomerase-mediated strand exchanges toward chromatid decatenation. Specifically required for decatenation of centromeric ultrafine DNA bridges during anaphase. Early in neurogenesis, may play an essential role to ensure accurate mitotic chromosome condensation in neuron stem cells, ultimately affecting neuron pool and cortex size. This Mus musculus (Mouse) protein is Condensin-2 complex subunit D3 (Ncapd3).